We begin with the raw amino-acid sequence, 190 residues long: Putative acetyltransferase DDB_G0275913 (190 aa).

This sequence belongs to the transferase hexapeptide repeat family.

The chain is Putative acetyltransferase DDB_G0275913 from Dictyostelium discoideum (Social amoeba).